The chain runs to 577 residues: Adenine deaminase (577 aa).

Belongs to the metallo-dependent hydrolases superfamily. Adenine deaminase family. Mn(2+) is required as a cofactor.

The catalysed reaction is adenine + H2O + H(+) = hypoxanthine + NH4(+). The protein is Adenine deaminase (adeC) of Bacillus subtilis (strain 168).